Reading from the N-terminus, the 244-residue chain is 5-oxoprolinase subunit A (244 aa).

This sequence belongs to the LamB/PxpA family. Forms a complex composed of PxpA, PxpB and PxpC.

It catalyses the reaction 5-oxo-L-proline + ATP + 2 H2O = L-glutamate + ADP + phosphate + H(+). Catalyzes the cleavage of 5-oxoproline to form L-glutamate coupled to the hydrolysis of ATP to ADP and inorganic phosphate. In Escherichia coli O139:H28 (strain E24377A / ETEC), this protein is 5-oxoprolinase subunit A.